An 87-amino-acid polypeptide reads, in one-letter code: CRISPR-associated endoribonuclease Cas2 (87 aa).

A Mg(2+)-binding site is contributed by aspartate 8.

Belongs to the CRISPR-associated endoribonuclease Cas2 protein family. In terms of assembly, homodimer, forms a heterotetramer with a Cas1 homodimer. The cofactor is Mg(2+).

CRISPR (clustered regularly interspaced short palindromic repeat), is an adaptive immune system that provides protection against mobile genetic elements (viruses, transposable elements and conjugative plasmids). CRISPR clusters contain sequences complementary to antecedent mobile elements and target invading nucleic acids. CRISPR clusters are transcribed and processed into CRISPR RNA (crRNA). Functions as a ssRNA-specific endoribonuclease. Involved in the integration of spacer DNA into the CRISPR cassette. The protein is CRISPR-associated endoribonuclease Cas2 of Frankia alni (strain DSM 45986 / CECT 9034 / ACN14a).